Here is a 352-residue protein sequence, read N- to C-terminus: Ribosomal lysine N-methyltransferase 5 (352 aa).

Residues Trp107, 161 to 163 (GSG), Asp183, Trp244, and Leu274 each bind S-adenosyl-L-methionine.

It belongs to the class I-like SAM-binding methyltransferase superfamily. RKM5 family.

S-adenosyl-L-methionine-dependent protein-lysine N-methyltransferase that methylates 60S ribosomal protein L1. This Candida glabrata (strain ATCC 2001 / BCRC 20586 / JCM 3761 / NBRC 0622 / NRRL Y-65 / CBS 138) (Yeast) protein is Ribosomal lysine N-methyltransferase 5 (RKM5).